Here is a 61-residue protein sequence, read N- to C-terminus: Early 3 Conserved Region 1-alpha protein (61 aa).

Topologically, residues 1–14 (MSNSSNSTSLSNFS) are lumenal. N-linked (GlcNAc...) asparagine; by host glycans are attached at residues N3, N6, and N12. A helical membrane pass occupies residues 15–35 (GIGVGVILTLVILFILILALL). Over 36–61 (CLRVAACCTHVCTYCQLFKRWGQHPR) the chain is Cytoplasmic.

This sequence belongs to the adenoviridae E3-CR1 family. In terms of assembly, interacts with E3 RID alpha and E3 RID beta. Post-translationally, only 1 of 3 three potential glycosylation sites is glycosylated. Oligosaccharides are not processed from high mannose to the complex type because the protein is retained in the endoplasmic reticulum.

It localises to the host endoplasmic reticulum membrane. The protein localises to the host cell membrane. Prevents infected cell apoptosis induced by the host immune system. May act by down-regulating host TRAIL receptors. May act in complex with E3 RID alpha and beta. May play a role on cellular apoptosis regulation in the ER. This Human adenovirus C serotype 2 (HAdV-2) protein is Early 3 Conserved Region 1-alpha protein.